A 910-amino-acid chain; its full sequence is Protein translocase subunit SecA (910 aa).

Residues Gln-86, 104-108 (GEGKT), and Asp-508 each bind ATP. The Zn(2+) site is built by Cys-894, Cys-896, Cys-905, and Cys-906.

This sequence belongs to the SecA family. Monomer and homodimer. Part of the essential Sec protein translocation apparatus which comprises SecA, SecYEG and auxiliary proteins SecDF. Other proteins may also be involved. Zn(2+) serves as cofactor.

It localises to the cell membrane. The protein localises to the cytoplasm. It catalyses the reaction ATP + H2O + cellular proteinSide 1 = ADP + phosphate + cellular proteinSide 2.. Functionally, part of the Sec protein translocase complex. Interacts with the SecYEG preprotein conducting channel. Has a central role in coupling the hydrolysis of ATP to the transfer of proteins into and across the cell membrane, serving as an ATP-driven molecular motor driving the stepwise translocation of polypeptide chains across the membrane. In Acetivibrio thermocellus (strain ATCC 27405 / DSM 1237 / JCM 9322 / NBRC 103400 / NCIMB 10682 / NRRL B-4536 / VPI 7372) (Clostridium thermocellum), this protein is Protein translocase subunit SecA.